Reading from the N-terminus, the 276-residue chain is Undecaprenyl-diphosphatase (276 aa).

A run of 6 helical transmembrane segments spans residues 43 to 63 (RAMAFNIIIQLGAILAVVWEF), 85 to 105 (LNLLIAFMPAVVLGVIFADTI), 109 to 129 (LFNAITVATALVIGGVIMLWA), 183 to 203 (AATEFSFFLAMPTMVGAAVYS), 218 to 238 (VFAIGFVTSFIFAMIAVRGLL), and 254 to 274 (IAFGLLILATWQFGWIDWASA).

Belongs to the UppP family.

It is found in the cell inner membrane. The enzyme catalyses di-trans,octa-cis-undecaprenyl diphosphate + H2O = di-trans,octa-cis-undecaprenyl phosphate + phosphate + H(+). Catalyzes the dephosphorylation of undecaprenyl diphosphate (UPP). Confers resistance to bacitracin. The sequence is that of Undecaprenyl-diphosphatase from Pseudomonas syringae pv. syringae (strain B728a).